The primary structure comprises 295 residues: Energy-coupling factor transporter ATP-binding protein EcfA2 (295 aa).

The ABC transporter domain occupies 3–246; sequence ITFKQVDFTY…PAWLTAHQLG (244 aa). 40–47 contributes to the ATP binding site; the sequence is GHTGSGKS.

This sequence belongs to the ABC transporter superfamily. Energy-coupling factor EcfA family. As to quaternary structure, forms a stable energy-coupling factor (ECF) transporter complex composed of 2 membrane-embedded substrate-binding proteins (S component), 2 ATP-binding proteins (A component) and 2 transmembrane proteins (T component).

The protein resides in the cell membrane. In terms of biological role, ATP-binding (A) component of a common energy-coupling factor (ECF) ABC-transporter complex. Unlike classic ABC transporters this ECF transporter provides the energy necessary to transport a number of different substrates. This is Energy-coupling factor transporter ATP-binding protein EcfA2 from Lactiplantibacillus plantarum (strain ATCC BAA-793 / NCIMB 8826 / WCFS1) (Lactobacillus plantarum).